A 472-amino-acid polypeptide reads, in one-letter code: Major capsid protein (472 aa).

It belongs to the phi29 phage major capsid protein family.

The protein localises to the virion. In terms of biological role, assembles to form a prolate capsid of about 45x54 nm, with a T=3, Q=5 symmetry. The chain is Major capsid protein (8) from Bacillus phage GA-1 (Bacteriophage GA-1).